The primary structure comprises 627 residues: Neutral endopeptidase (627 aa).

One can recognise a Peptidase M13 domain in the interval 1–627; that stretch reads MTRIQDDLFA…RAPENRLKIW (627 aa). His-475 provides a ligand contact to Zn(2+). The active site involves Glu-476. 2 residues coordinate Zn(2+): His-479 and Glu-535. The active-site Proton donor is the Asp-539.

Belongs to the peptidase M13 family. As to quaternary structure, monomer. The cofactor is Zn(2+).

It is found in the cytoplasm. In terms of biological role, endopeptidase with broad substrate specificity for several oligopeptides. The sequence is that of Neutral endopeptidase (pepO) from Lactococcus lactis subsp. cremoris (Streptococcus cremoris).